A 258-amino-acid polypeptide reads, in one-letter code: Hydroxyacylglutathione hydrolase (258 aa).

Zn(2+) is bound by residues H56, H58, D60, H61, H112, D132, and H170.

The protein belongs to the metallo-beta-lactamase superfamily. Glyoxalase II family. Monomer. The cofactor is Zn(2+).

It catalyses the reaction an S-(2-hydroxyacyl)glutathione + H2O = a 2-hydroxy carboxylate + glutathione + H(+). The protein operates within secondary metabolite metabolism; methylglyoxal degradation; (R)-lactate from methylglyoxal: step 2/2. Functionally, thiolesterase that catalyzes the hydrolysis of S-D-lactoyl-glutathione to form glutathione and D-lactic acid. This is Hydroxyacylglutathione hydrolase from Pseudomonas paraeruginosa (strain DSM 24068 / PA7) (Pseudomonas aeruginosa (strain PA7)).